We begin with the raw amino-acid sequence, 268 residues long: Putative esterase/lipase 1 (268 aa).

Residue H27 is part of the active site. S94 (charge relay system) is an active-site residue.

This sequence belongs to the lipase/esterase LIP3/BchO family.

This is Putative esterase/lipase 1 from Mycoplasma genitalium (strain ATCC 33530 / DSM 19775 / NCTC 10195 / G37) (Mycoplasmoides genitalium).